The sequence spans 309 residues: Coenzyme PQQ synthesis protein B (309 aa).

Belongs to the PqqB family.

It participates in cofactor biosynthesis; pyrroloquinoline quinone biosynthesis. In terms of biological role, may be involved in the transport of PQQ or its precursor to the periplasm. This is Coenzyme PQQ synthesis protein B from Bradyrhizobium diazoefficiens (strain JCM 10833 / BCRC 13528 / IAM 13628 / NBRC 14792 / USDA 110).